The sequence spans 456 residues: Ribosomal protein uS12 methylthiotransferase RimO (456 aa).

In terms of domain architecture, MTTase N-terminal spans 11 to 126 (PKVGFVSLGC…VMQAVHTHLP (116 aa)). Cys20, Cys56, Cys85, Cys157, Cys161, and Cys164 together coordinate [4Fe-4S] cluster. The region spanning 143 to 384 (LTPKHYAYLK…MEVAEEVSAR (242 aa)) is the Radical SAM core domain. The region spanning 387 to 456 (QRKVGQTLRV…DGHDLWGEVA (70 aa)) is the TRAM domain.

The protein belongs to the methylthiotransferase family. RimO subfamily. It depends on [4Fe-4S] cluster as a cofactor.

It is found in the cytoplasm. The enzyme catalyses L-aspartate(89)-[ribosomal protein uS12]-hydrogen + (sulfur carrier)-SH + AH2 + 2 S-adenosyl-L-methionine = 3-methylsulfanyl-L-aspartate(89)-[ribosomal protein uS12]-hydrogen + (sulfur carrier)-H + 5'-deoxyadenosine + L-methionine + A + S-adenosyl-L-homocysteine + 2 H(+). Functionally, catalyzes the methylthiolation of an aspartic acid residue of ribosomal protein uS12. This Cupriavidus metallidurans (strain ATCC 43123 / DSM 2839 / NBRC 102507 / CH34) (Ralstonia metallidurans) protein is Ribosomal protein uS12 methylthiotransferase RimO.